A 185-amino-acid polypeptide reads, in one-letter code: Probable RNA 2'-phosphotransferase (185 aa).

Belongs to the KptA/TPT1 family.

Functionally, removes the 2'-phosphate from RNA via an intermediate in which the phosphate is ADP-ribosylated by NAD followed by a presumed transesterification to release the RNA and generate ADP-ribose 1''-2''-cyclic phosphate (APPR&gt;P). May function as an ADP-ribosylase. The sequence is that of Probable RNA 2'-phosphotransferase from Rhizobium rhizogenes (strain K84 / ATCC BAA-868) (Agrobacterium radiobacter).